The sequence spans 260 residues: Carbonic anhydrase 3 (260 aa).

Ala-2 carries the N-acetylalanine modification. Residues 3–259 (KEWGYADHNG…LKGRVVRASF (257 aa)) enclose the Alpha-carbonic anhydrase domain. Ser-29, Ser-43, Ser-50, and Ser-55 each carry phosphoserine. Residues 64–67 (RTCR) form an involved in proton transfer region. Phosphothreonine is present on Thr-73. Zn(2+)-binding residues include His-94, His-96, and His-119. Position 127 is a phosphotyrosine (Tyr-127). 2 positions are modified to phosphothreonine: Thr-129 and Thr-176. S-glutathionyl cysteine occurs at positions 182 and 187. 198 to 199 (TT) serves as a coordination point for substrate. The residue at position 216 (Thr-216) is a Phosphothreonine. At Ser-219 the chain carries Phosphoserine.

It belongs to the alpha-carbonic anhydrase family. Zn(2+) serves as cofactor. In terms of processing, S-thiolated both by thiol-disulfide exchange with glutathione disulfide and by oxyradical-initiated S-thiolation with reduced glutathione. S-glutathionylated in hepatocytes under oxidative stress.

It localises to the cytoplasm. It catalyses the reaction hydrogencarbonate + H(+) = CO2 + H2O. Inhibited by acetazolamide. Its function is as follows. Reversible hydration of carbon dioxide. In Equus caballus (Horse), this protein is Carbonic anhydrase 3 (CA3).